Reading from the N-terminus, the 34-residue chain is Brevinin-2GHa (34 aa).

Cys27 and Cys33 are joined by a disulfide.

In terms of tissue distribution, expressed by the skin glands.

Its subcellular location is the secreted. In terms of biological role, antimicrobial peptide. Active against the Gram-positive bacteria S.aureus FDA209P (MIC=14.9 ug/ml) and B.subtilis ATCC 6633 (MIC&gt;64 ug/ml), but not active against the Gram-negative bacterium E.coli or the fungus C.albicans. The chain is Brevinin-2GHa from Sylvirana guentheri (Gunther's frog).